The chain runs to 320 residues: Rhomboid-like protein 17, chloroplastic (320 aa).

The N-terminal 87 residues, 1–87, are a transit peptide targeting the chloroplast; it reads MHAIFSSFSR…LKFGNVMESR (87 aa). The next 5 helical transmembrane spans lie at 116 to 136, 160 to 180, 199 to 219, 247 to 267, and 295 to 315; these read WINGANGVVFGLVIANAAVFT, LITSGFSHIGTSQIILNMIGI, LYFAGALGGSVCFLSYHALLA, MFAIALLDMFIYPKVTTYFAL, and IASSSGQLGGVVVAAMAWARI.

It belongs to the peptidase S54 family.

It localises to the plastid. The protein localises to the chloroplast membrane. Functionally, probable rhomboid-type serine protease that catalyzes intramembrane proteolysis. This chain is Rhomboid-like protein 17, chloroplastic, found in Arabidopsis thaliana (Mouse-ear cress).